Consider the following 411-residue polypeptide: LL-diaminopimelate aminotransferase 1 (411 aa).

2 residues coordinate substrate: tyrosine 15 and glycine 42. Residues tyrosine 72, 108–109 (SK), tyrosine 132, asparagine 187, tyrosine 218, and 246–248 (SFS) contribute to the pyridoxal 5'-phosphate site. Positions 109, 132, and 187 each coordinate substrate. At lysine 249 the chain carries N6-(pyridoxal phosphate)lysine. Arginine 257 and asparagine 292 together coordinate pyridoxal 5'-phosphate. Asparagine 292 and arginine 388 together coordinate substrate.

Belongs to the class-I pyridoxal-phosphate-dependent aminotransferase family. LL-diaminopimelate aminotransferase subfamily. In terms of assembly, homodimer. The cofactor is pyridoxal 5'-phosphate.

It catalyses the reaction (2S,6S)-2,6-diaminopimelate + 2-oxoglutarate = (S)-2,3,4,5-tetrahydrodipicolinate + L-glutamate + H2O + H(+). Its pathway is amino-acid biosynthesis; L-lysine biosynthesis via DAP pathway; LL-2,6-diaminopimelate from (S)-tetrahydrodipicolinate (aminotransferase route): step 1/1. Involved in the synthesis of meso-diaminopimelate (m-DAP or DL-DAP), required for both lysine and peptidoglycan biosynthesis. Catalyzes the direct conversion of tetrahydrodipicolinate to LL-diaminopimelate. This is LL-diaminopimelate aminotransferase 1 from Nostoc sp. (strain PCC 7120 / SAG 25.82 / UTEX 2576).